The sequence spans 408 residues: DNA primase DnaG (408 aa).

The Toprim domain occupies 171–250 (DAIIIVEGRA…AYSPRGKSVE (80 aa)). Mg(2+) contacts are provided by E177, D219, and D221. The tract at residues 276–323 (AEENVERLPPSAAPAEVRAPAGAGRTSEGERPPRREWDSKPPSTLGEH) is disordered. The span at 284–298 (PPSAAPAEVRAPAGA) shows a compositional bias: low complexity. A compositionally biased stretch (basic and acidic residues) spans 302–314 (SEGERPPRREWDS).

Belongs to the archaeal DnaG primase family. Forms a ternary complex with MCM helicase and DNA. It depends on Mg(2+) as a cofactor.

It catalyses the reaction ssDNA + n NTP = ssDNA/pppN(pN)n-1 hybrid + (n-1) diphosphate.. Its function is as follows. RNA polymerase that catalyzes the synthesis of short RNA molecules used as primers for DNA polymerase during DNA replication. The sequence is that of DNA primase DnaG from Methanoculleus marisnigri (strain ATCC 35101 / DSM 1498 / JR1).